A 112-amino-acid chain; its full sequence is ATP synthase subunit c (112 aa).

Transmembrane regions (helical) follow at residues 36–56 (FSVL…AIGM) and 81–101 (MFIA…IALI).

Belongs to the ATPase C chain family. As to quaternary structure, F-type ATPases have 2 components, F(1) - the catalytic core - and F(0) - the membrane proton channel. F(1) has five subunits: alpha(3), beta(3), gamma(1), delta(1), epsilon(1). F(0) has three main subunits: a(1), b(2) and c(10-14). The alpha and beta chains form an alternating ring which encloses part of the gamma chain. F(1) is attached to F(0) by a central stalk formed by the gamma and epsilon chains, while a peripheral stalk is formed by the delta and b chains.

The protein resides in the cell inner membrane. Its function is as follows. F(1)F(0) ATP synthase produces ATP from ADP in the presence of a proton or sodium gradient. F-type ATPases consist of two structural domains, F(1) containing the extramembraneous catalytic core and F(0) containing the membrane proton channel, linked together by a central stalk and a peripheral stalk. During catalysis, ATP synthesis in the catalytic domain of F(1) is coupled via a rotary mechanism of the central stalk subunits to proton translocation. Key component of the F(0) channel; it plays a direct role in translocation across the membrane. A homomeric c-ring of between 10-14 subunits forms the central stalk rotor element with the F(1) delta and epsilon subunits. The polypeptide is ATP synthase subunit c (Campylobacter jejuni subsp. jejuni serotype O:6 (strain 81116 / NCTC 11828)).